A 513-amino-acid polypeptide reads, in one-letter code: Activin receptor type-2A (513 aa).

The first 19 residues, 1 to 19 (MGAAAKLAFAVFLISCSSG), serve as a signal peptide directing secretion. Residues 20–135 (AILGRSETQE…TSNPVTPKPP (116 aa)) are Extracellular-facing. 5 cysteine pairs are disulfide-bonded: cysteine 30-cysteine 60, cysteine 50-cysteine 78, cysteine 85-cysteine 104, cysteine 91-cysteine 103, and cysteine 105-cysteine 110. Residues asparagine 43 and asparagine 66 are each glycosylated (N-linked (GlcNAc...) asparagine). A helical transmembrane segment spans residues 136 to 161 (YYNILLYSLVPLMLIAGIVICAFWVY). Residues 162 to 513 (RHHKMAYPPV…VDFPPKESSL (352 aa)) lie on the Cytoplasmic side of the membrane. The Protein kinase domain maps to 192 to 485 (LQLLEVKARG…GERITQMQRL (294 aa)). Residues 198–206 (KARGRFGCV) and lysine 219 contribute to the ATP site. The Proton acceptor role is filled by aspartate 322.

The protein belongs to the protein kinase superfamily. TKL Ser/Thr protein kinase family. TGFB receptor subfamily. As to quaternary structure, part of a complex consisting of MAGI2/ARIP1, ACVR2A, ACVR1B and SMAD3. Interacts with MAGI2/ARIP1. Interacts with type I receptor ACVR1. Interacts with BMP7. Interacts with TSC22D1/TSC-22. Interacts with activin A/INHBA. Requires Mg(2+) as cofactor. Mn(2+) is required as a cofactor. As to expression, brain, testis, intestine, liver and kidney.

Its subcellular location is the cell membrane. It catalyses the reaction L-threonyl-[receptor-protein] + ATP = O-phospho-L-threonyl-[receptor-protein] + ADP + H(+). The catalysed reaction is L-seryl-[receptor-protein] + ATP = O-phospho-L-seryl-[receptor-protein] + ADP + H(+). Functionally, on ligand binding, forms a receptor complex consisting of two type II and two type I transmembrane serine/threonine kinases. Type II receptors phosphorylate and activate type I receptors which autophosphorylate, then bind and activate SMAD transcriptional regulators. Receptor for activin A, activin B and inhibin A. Mediates induction of adipogenesis by GDF6. The polypeptide is Activin receptor type-2A (Mus musculus (Mouse)).